The sequence spans 229 residues: 23 kDa piroplasm membrane protein (229 aa).

The signal sequence occupies residues Met1 to Ser19. At Ser20 to Tyr203 the chain is on the extracellular side. A helical membrane pass occupies residues Val204–Val224. Topologically, residues Lys225–Lys229 are cytoplasmic.

It localises to the membrane. This Theileria annulata protein is 23 kDa piroplasm membrane protein.